The following is a 255-amino-acid chain: Indole-3-glycerol phosphate synthase (255 aa).

The protein belongs to the TrpC family.

It carries out the reaction 1-(2-carboxyphenylamino)-1-deoxy-D-ribulose 5-phosphate + H(+) = (1S,2R)-1-C-(indol-3-yl)glycerol 3-phosphate + CO2 + H2O. The protein operates within amino-acid biosynthesis; L-tryptophan biosynthesis; L-tryptophan from chorismate: step 4/5. The sequence is that of Indole-3-glycerol phosphate synthase from Streptococcus sanguinis (strain SK36).